A 180-amino-acid chain; its full sequence is Peptide deformylase (180 aa).

Positions 88 and 130 each coordinate Fe cation. E131 is an active-site residue. Residue H134 coordinates Fe cation.

The protein belongs to the polypeptide deformylase family. Requires Fe(2+) as cofactor.

The enzyme catalyses N-terminal N-formyl-L-methionyl-[peptide] + H2O = N-terminal L-methionyl-[peptide] + formate. In terms of biological role, removes the formyl group from the N-terminal Met of newly synthesized proteins. Requires at least a dipeptide for an efficient rate of reaction. N-terminal L-methionine is a prerequisite for activity but the enzyme has broad specificity at other positions. The protein is Peptide deformylase of Acidothermus cellulolyticus (strain ATCC 43068 / DSM 8971 / 11B).